A 352-amino-acid chain; its full sequence is Rhodopsin (352 aa).

At 1–36 the chain is on the extracellular side; the sequence is MNGTEGPYFYVPMSNATGVVRSPYEYPQYYLAPPWA. N-linked (GlcNAc...) asparagine glycans are attached at residues N2 and N15. Residues 37-61 traverse the membrane as a helical segment; the sequence is YACLAAYMFFLILVGFPVNFLTLYV. The Cytoplasmic portion of the chain corresponds to 62 to 73; that stretch reads TIEHKKLRTPLN. The chain crosses the membrane as a helical span at residues 74–96; it reads YILLNLAVADLFMVFGGFTTTMY. Residues 97–110 lie on the Extracellular side of the membrane; it reads TSLNGYFVFGRLGC. A disulfide bond links C110 and C187. Residues 111–133 form a helical membrane-spanning segment; the sequence is NLEGFFATFGGINSLWCLVVLSI. Positions 134 to 136 match the 'Ionic lock' involved in activated form stabilization motif; that stretch reads ERW. Over 134–152 the chain is Cytoplasmic; that stretch reads ERWVVVCKPMSNFRFGENH. Residues 153–173 form a helical membrane-spanning segment; it reads AIMGVAFTWFMALACTVPPLV. Residues 174-202 are Extracellular-facing; it reads GWSRYIPEGMQCSCGIDYYTRAEGFNNES. Residues 203-224 traverse the membrane as a helical segment; that stretch reads FVIYMFVVHFLTPLFVITFCYG. Over 225–252 the chain is Cytoplasmic; it reads RLVCTVKEAAAQQQESETTQRAEREVTR. The chain crosses the membrane as a helical span at residues 253 to 274; the sequence is MVILMFIAYLVCWLPYASVSWW. The Extracellular portion of the chain corresponds to 275–286; it reads IFTNQGSEFGPI. The helical transmembrane segment at 287 to 308 threads the bilayer; sequence FMTVPAFFAKSSSIYNPVIYIC. K296 bears the N6-(retinylidene)lysine mark. Residues 309 to 352 lie on the Cytoplasmic side of the membrane; sequence LNKQFRHCMITTLCCGKNPFEEEEGASTTASKTEASSVSSVSPA. Residues C322 and C323 are each lipidated (S-palmitoyl cysteine). The tract at residues 331–352 is disordered; the sequence is EEGASTTASKTEASSVSSVSPA. Residues 334–352 show a composition bias toward low complexity; sequence ASTTASKTEASSVSSVSPA.

This sequence belongs to the G-protein coupled receptor 1 family. Opsin subfamily. Phosphorylated on some or all of the serine and threonine residues present in the C-terminal region. Post-translationally, contains one covalently linked retinal chromophore.

The protein localises to the membrane. Its subcellular location is the cell projection. The protein resides in the cilium. It is found in the photoreceptor outer segment. Its function is as follows. Photoreceptor required for image-forming vision at low light intensity. While most salt water fish species use retinal as chromophore, most freshwater fish use 3-dehydroretinal, or a mixture of retinal and 3-dehydroretinal. Light-induced isomerization of 11-cis to all-trans retinal triggers a conformational change that activates signaling via G-proteins. Subsequent receptor phosphorylation mediates displacement of the bound G-protein alpha subunit by arrestin and terminates signaling. In Psalidodon fasciatus (Banded astyanax), this protein is Rhodopsin (rho).